A 112-amino-acid chain; its full sequence is Peptidyl-tRNA hydrolase (112 aa).

Belongs to the PTH2 family.

It is found in the cytoplasm. It carries out the reaction an N-acyl-L-alpha-aminoacyl-tRNA + H2O = an N-acyl-L-amino acid + a tRNA + H(+). In terms of biological role, the natural substrate for this enzyme may be peptidyl-tRNAs which drop off the ribosome during protein synthesis. The polypeptide is Peptidyl-tRNA hydrolase (Methanothermobacter thermautotrophicus (strain ATCC 29096 / DSM 1053 / JCM 10044 / NBRC 100330 / Delta H) (Methanobacterium thermoautotrophicum)).